A 709-amino-acid chain; its full sequence is MGKARRSPPGHHRHCEGCFNRHCHIPVEPNTSCLVISCHLLCGATFHMCKEAEHQLLCPLEQVPCLNSEYGCPLSMSRHKLAKHLQVCPASVVCCSMEWNRWPNVDSETTLHENIMKETPSEECLDTALALQDQKVLFRSLKMVELFPETREATEEEPTMNGETSVEEMGGAVGGVDIGLVPHGLSATNGEMAELSQEEREVLAKTKEGMDLVKFGQWENIFSKEHAASALTNSSASCESKNKNDSEKEQISSGHNMVEGEGAPKKKEPQENQKQQDVRTAMETTGLAPWQDGVLERLKTAVDAKDYNMYLVHNGRMLIHFGQMPACTPKERDFVYGKLEAQEVKTVYTFKVPVSYCGKRARLGDAMLSCKPSEHKAVDTSDLGITVEDLPKSDLIKTTLQCALERELKGHVISESRSIDGLFMDFATQTYNFEPEQFSSGTVLADLTAATPGGLHVELHSECVTRRHNKSSSAFTFTCNKFFRRDEFPLHFKNVHTDIQSCLNGWFQHRCPLAYLGCTFVQNHFRPPGQKAKVIYSQELKTFAIKPEVAPELSEGRKNNHLLGHGGKSQNSLTSLPLEILKYIAGFLDSVSLAQLSQVSVLMRNICATLLQERGMVLLQWKKKRYSHGGTSWRVHREIWQFSSLFSKIKSWEFNEVTSMSEHLKSCPFNIVEHKTDPILLTSMCQPREQARESLVSTFRIRPRGRYVS.

A TRAF-type zinc finger spans residues 53–112 (EHQLLCPLEQVPCLNSEYGCPLSMSRHKLAKHLQVCPASVVCCSMEWNRWPNVDSETTLH). Residues 232 to 280 (TNSSASCESKNKNDSEKEQISSGHNMVEGEGAPKKKEPQENQKQQDVRT) are disordered. 2 stretches are compositionally biased toward basic and acidic residues: residues 240 to 250 (SKNKNDSEKEQ) and 262 to 277 (GAPKKKEPQENQKQQD). The 55-residue stretch at 570–624 (QNSLTSLPLEILKYIAGFLDSVSLAQLSQVSVLMRNICATLLQERGMVLLQWKKK) folds into the F-box domain.

In terms of assembly, directly interacts with SKP1 and CUL1. Expressed only in heart and skeletal muscle.

The protein localises to the cytoplasm. Probable substrate-recognition component of the SCF (SKP1-CUL1-F-box protein)-type E3 ubiquitin ligase complex that may function in myogenesis. This Homo sapiens (Human) protein is F-box only protein 40 (FBXO40).